Consider the following 246-residue polypeptide: Major prion protein (246 aa).

Residues 1 to 15 form the signal peptide; it reads MLVVFVATWSDLGLC. Residues 16–223 are interaction with GRB2, ERI3 and SYN1; that stretch reads KKRPKPGGWN…ESQAYYQRGS (208 aa). The segment at 18–100 is disordered; sequence RPKPGGWNTG…QWHKPSKPKT (83 aa). 5 repeat units span residues 44-52, 53-60, 61-68, 69-76, and 77-84. Positions 44 to 84 are 5 X 8 AA tandem repeats of P-H-G-G-G-W-G-Q; it reads PQGGGGWGQPHGGGWGQPHGGGWGQPHGGGWGQPHGGGWGQ. Gly residues predominate over residues 45 to 88; the sequence is QGGGGWGQPHGGGWGQPHGGGWGQPHGGGWGQPHGGGWGQGGGT. The Cu(2+) site is built by histidine 54, glycine 55, glycine 56, histidine 62, glycine 63, glycine 64, histidine 70, glycine 71, glycine 72, histidine 78, glycine 79, and glycine 80. Residues 91 to 100 are compositionally biased toward basic residues; the sequence is QWHKPSKPKT. A disulfide bond links cysteine 172 and cysteine 207. 2 N-linked (GlcNAc...) asparagine glycosylation sites follow: asparagine 174 and asparagine 190. The GPI-anchor amidated serine moiety is linked to residue serine 223. Residues 224 to 246 constitute a propeptide, removed in mature form; it reads SMVLFSSPPVILLISFLIFLIVG.

It belongs to the prion family. In terms of assembly, monomer and homodimer. Has a tendency to aggregate into amyloid fibrils containing a cross-beta spine, formed by a steric zipper of superposed beta-strands. Soluble oligomers may represent an intermediate stage on the path to fibril formation. Copper binding may promote oligomerization. Interacts with GRB2, APP, ERI3/PRNPIP and SYN1. Mislocalized cytosolically exposed PrP interacts with MGRN1; this interaction alters MGRN1 subcellular location and causes lysosomal enlargement. Interacts with KIAA1191.

The protein localises to the cell membrane. It is found in the golgi apparatus. Functionally, its primary physiological function is unclear. Has cytoprotective activity against internal or environmental stresses. May play a role in neuronal development and synaptic plasticity. May be required for neuronal myelin sheath maintenance. May play a role in iron uptake and iron homeostasis. Soluble oligomers are toxic to cultured neuroblastoma cells and induce apoptosis (in vitro). Association with GPC1 (via its heparan sulfate chains) targets PRNP to lipid rafts. Also provides Cu(2+) or Zn(2+) for the ascorbate-mediated GPC1 deaminase degradation of its heparan sulfate side chains. This chain is Major prion protein (PRNP), found in Erythrocebus patas (Red guenon).